The chain runs to 434 residues: Probable zinc metalloprotease PTRG_04772 (434 aa).

The N-linked (GlcNAc...) asparagine glycan is linked to asparagine 88. Histidine 111, aspartate 131, and glutamate 164 together coordinate Zn(2+). Residue asparagine 179 is glycosylated (N-linked (GlcNAc...) asparagine). Aspartate 191 contributes to the Zn(2+) binding site. N-linked (GlcNAc...) asparagine glycosylation is found at asparagine 220, asparagine 299, asparagine 347, asparagine 353, asparagine 390, and asparagine 395. In terms of domain architecture, Fibronectin type-III spans 340 to 433; the sequence is SPTNVGINTT…LPFPFGCARN (94 aa).

The protein belongs to the peptidase M28 family. M28B subfamily. Requires Zn(2+) as cofactor.

It is found in the secreted. The protein is Probable zinc metalloprotease PTRG_04772 of Pyrenophora tritici-repentis (strain Pt-1C-BFP) (Wheat tan spot fungus).